Here is a 228-residue protein sequence, read N- to C-terminus: Uracil-DNA glycosylase (228 aa).

Residue aspartate 64 is the Proton acceptor of the active site.

The protein belongs to the uracil-DNA glycosylase (UDG) superfamily. UNG family.

Its subcellular location is the cytoplasm. The enzyme catalyses Hydrolyzes single-stranded DNA or mismatched double-stranded DNA and polynucleotides, releasing free uracil.. Functionally, excises uracil residues from the DNA which can arise as a result of misincorporation of dUMP residues by DNA polymerase or due to deamination of cytosine. The protein is Uracil-DNA glycosylase of Pectobacterium carotovorum subsp. carotovorum (strain PC1).